Reading from the N-terminus, the 152-residue chain is Ribosome maturation factor RimP (152 aa).

This sequence belongs to the RimP family.

It is found in the cytoplasm. In terms of biological role, required for maturation of 30S ribosomal subunits. This chain is Ribosome maturation factor RimP, found in Teredinibacter turnerae (strain ATCC 39867 / T7901).